We begin with the raw amino-acid sequence, 236 residues long: HTH-type transcriptional regulator SACE_5812 (236 aa).

Residues 30 to 90 (LLTQDKIVSA…LALDAVFGEV (61 aa)) form the HTH tetR-type domain. Residues 53 to 72 (SMRKLADRLQAHATSLYWHV) constitute a DNA-binding region (H-T-H motif).

In terms of biological role, transcriptional regulator that inhibits erythromycin production. Directly represses the expression of SACE_5813, eryAI (encoding polyketide synthase I) and ermE (encoding rRNA methyltransferase), suggesting its direct regulation of the erythromycin biosynthesis gene cluster. May play an important role in regulating secondary metabolism in actinomycetes. This Saccharopolyspora erythraea (strain ATCC 11635 / DSM 40517 / JCM 4748 / NBRC 13426 / NCIMB 8594 / NRRL 2338) protein is HTH-type transcriptional regulator SACE_5812.